The following is a 289-amino-acid chain: Serine/threonine-protein phosphatase Pgam5, mitochondrial (289 aa).

The helical transmembrane segment at 7 to 23 (FACGTGAGLAAYYLQKL) threads the bilayer.

The protein belongs to the phosphoglycerate mutase family. BPG-dependent PGAM subfamily. As to quaternary structure, interacts with Pk92B/ASK1.

Its subcellular location is the mitochondrion outer membrane. The enzyme catalyses O-phospho-L-seryl-[protein] + H2O = L-seryl-[protein] + phosphate. The catalysed reaction is O-phospho-L-threonyl-[protein] + H2O = L-threonyl-[protein] + phosphate. Displays phosphatase activity for serine/threonine residues, and dephosphorylates and activates Pk92B kinase. Has apparently no phosphoglycerate mutase activity. The sequence is that of Serine/threonine-protein phosphatase Pgam5, mitochondrial from Drosophila virilis (Fruit fly).